The sequence spans 268 residues: Small ribosomal subunit protein eS1 (268 aa).

Disordered stretches follow at residues 1 to 21 (MAVG…KKKV) and 238 to 268 (GGGK…QEAV).

Belongs to the eukaryotic ribosomal protein eS1 family. In terms of assembly, component of the small ribosomal subunit. Mature ribosomes consist of a small (40S) and a large (60S) subunit. The 40S subunit contains about 33 different proteins and 1 molecule of RNA (18S). The 60S subunit contains about 49 different proteins and 3 molecules of RNA (28S, 5.8S and 5S).

It localises to the cytoplasm. Functionally, essential for oogenesis; required for late follicle cell development. The chain is Small ribosomal subunit protein eS1 from Drosophila ananassae (Fruit fly).